The sequence spans 506 residues: ATP synthase subunit alpha (506 aa).

Position 170–177 (170–177 (GDRQTGKT)) interacts with ATP.

It belongs to the ATPase alpha/beta chains family. As to quaternary structure, F-type ATPases have 2 components, CF(1) - the catalytic core - and CF(0) - the membrane proton channel. CF(1) has five subunits: alpha(3), beta(3), gamma(1), delta(1), epsilon(1). CF(0) has four main subunits: a(1), b(1), b'(1) and c(9-12).

The protein localises to the cellular thylakoid membrane. The catalysed reaction is ATP + H2O + 4 H(+)(in) = ADP + phosphate + 5 H(+)(out). Functionally, produces ATP from ADP in the presence of a proton gradient across the membrane. The alpha chain is a regulatory subunit. The polypeptide is ATP synthase subunit alpha (Parasynechococcus marenigrum (strain WH8102)).